A 217-amino-acid chain; its full sequence is Non-structural protein NS3 (217 aa).

This sequence belongs to the orbivirus NS3 family.

Functionally, may play a role in the release of virions from infected cells. This chain is Non-structural protein NS3 (Segment-10), found in Camelus dromedarius (Dromedary).